The primary structure comprises 119 residues: Protein TusC (119 aa).

It belongs to the DsrF/TusC family. In terms of assembly, heterohexamer, formed by a dimer of trimers. The hexameric TusBCD complex contains 2 copies each of TusB, TusC and TusD. The TusBCD complex interacts with TusE.

It localises to the cytoplasm. Functionally, part of a sulfur-relay system required for 2-thiolation of 5-methylaminomethyl-2-thiouridine (mnm(5)s(2)U) at tRNA wobble positions. The sequence is that of Protein TusC from Buchnera aphidicola subsp. Baizongia pistaciae (strain Bp).